The chain runs to 748 residues: MTTEAKCPFNHSVVGAGTTNRDWWPKQLRVDLLNQHSARSNPLAASFNYAEAFKRLDLQTLKQELRALMTDSQDWWPADFGHYGPLFVRMAWHSAGTYRTGDGRGGGGRGQQRFAPLNSWPDNVSLDKARRLLWPIKQKYGQAISWADLMILTGNVALESMGFKTFGFAGGREDTWEPDQDLYWGRETKWLGGDDRYAHGSPGVDQAHGVLVKDDDSEVQHTRDLENPLAAVQMGLIYVNPEGPDGNPDPLLAAKDIRDTFGRMAMNDEETVALIAGGHTFGKTHGAADAAHVAAEPEASDLESQGLGWHNSFGSGKGGDTITSGLEVTWTTTPAQWSNDFFDHLFGFEWELSKSPAGAHQWVAKNAQAIIPDAHDASKKRLPTMLTTDLALRIDPAYEAISRRFHANPDQFADAFARAWFKLTHRDMGPRARYLGADVPAEELLWQDPIPALNHALIDAQDAAALKQTVLSSGLSVAQLVATAWASASSFRGSDKRGGANGARIRLAPQKDWASNEPAQLAQVLATLERIQADFNARQSGGKQISLADLIVLGGNAAVEQAAHAAGHAVTVPFAPGRMDASQAQTDVESFAVLEPVADGFRNYAKARYAVSAEALLIDKAQLLTLTAPEMTVLVGGLRVLGANTGQSHNGVFTTRPGVLSNDFFANLLDMRTEWKATSETKETYEGRDRATGEHKWTGTRVDLVFGSNSILRAVAEVYASADAQEKFVQDFVAAWTKVMQLDRFDLA.

The tryptophyl-tyrosyl-methioninium (Trp-Tyr) (with M-264) cross-link spans tryptophan 92–tyrosine 238. The Proton acceptor role is filled by histidine 93. Positions tyrosine 238–methionine 264 form a cross-link, tryptophyl-tyrosyl-methioninium (Tyr-Met) (with W-92). Histidine 279 is a binding site for heme b.

It belongs to the peroxidase family. Peroxidase/catalase subfamily. In terms of assembly, homodimer or homotetramer. Requires heme b as cofactor. In terms of processing, formation of the three residue Trp-Tyr-Met cross-link is important for the catalase, but not the peroxidase activity of the enzyme.

The enzyme catalyses H2O2 + AH2 = A + 2 H2O. It carries out the reaction 2 H2O2 = O2 + 2 H2O. Its function is as follows. Bifunctional enzyme with both catalase and broad-spectrum peroxidase activity. The protein is Catalase-peroxidase of Xanthomonas campestris pv. campestris (strain 8004).